The primary structure comprises 354 residues: Magnesium-protoporphyrin IX monomethyl ester [oxidative] cyclase (354 aa).

The protein belongs to the AcsF family. Requires Fe cation as cofactor.

The protein localises to the plastid. It is found in the chloroplast. It catalyses the reaction Mg-protoporphyrin IX 13-monomethyl ester + 3 NADPH + 3 O2 + 2 H(+) = 3,8-divinyl protochlorophyllide a + 3 NADP(+) + 5 H2O. It functions in the pathway porphyrin-containing compound metabolism; chlorophyll biosynthesis (light-independent). Catalyzes the formation of the isocyclic ring in chlorophyll biosynthesis. Mediates the cyclase reaction, which results in the formation of divinylprotochlorophyllide (Pchlide) characteristic of all chlorophylls from magnesium-protoporphyrin IX 13-monomethyl ester (MgPMME). The sequence is that of Magnesium-protoporphyrin IX monomethyl ester [oxidative] cyclase from Cyanidium caldarium (Red alga).